Consider the following 55-residue polypeptide: Large ribosomal subunit protein uL30 (55 aa).

The protein belongs to the universal ribosomal protein uL30 family. As to quaternary structure, part of the 50S ribosomal subunit.

Functionally, binds the 5S and 23S rRNAs. This is Large ribosomal subunit protein uL30 from Deinococcus radiodurans (strain ATCC 13939 / DSM 20539 / JCM 16871 / CCUG 27074 / LMG 4051 / NBRC 15346 / NCIMB 9279 / VKM B-1422 / R1).